We begin with the raw amino-acid sequence, 252 residues long: 5'-nucleotidase SurE (252 aa).

A divalent metal cation contacts are provided by Asp-8, Asp-9, Ser-40, and Asn-92.

The protein belongs to the SurE nucleotidase family. Requires a divalent metal cation as cofactor.

The protein localises to the cytoplasm. It carries out the reaction a ribonucleoside 5'-phosphate + H2O = a ribonucleoside + phosphate. Its function is as follows. Nucleotidase that shows phosphatase activity on nucleoside 5'-monophosphates. The chain is 5'-nucleotidase SurE from Chelativorans sp. (strain BNC1).